A 699-amino-acid chain; its full sequence is TPR repeat-containing thioredoxin TTL1 (699 aa).

Residues 1–211 are disordered; sequence MPKSVKPISE…SSSRSSSTVA (211 aa). The span at 9-20 shows a compositional bias: basic and acidic residues; that stretch reads SESDKLSDHLRD. 2 positions are modified to phosphoserine: Ser39 and Ser42. Composition is skewed to low complexity over residues 52–70 and 83–135; these read TTTT…SSGS and RSNS…TSPA. Over residues 166 to 182 the composition is skewed to gly residues; sequence SGTGTYGHGSIMRGGGI. Low complexity predominate over residues 195 to 210; sequence NSPVNVGSSSRSSSTV. TPR repeat units lie at residues 227–260, 262–294, 296–328, 419–452, 465–498, 499–532, and 534–566; these read SEEV…SPTN, AYRS…DPNY, RAHH…SDPM, AYIY…DPRC, VARA…DPCN, AILY…QPSY, and KPLL…LPHD. Residues 605-691 form the Thioredoxin domain; sequence QFKSAMNLPG…IVCPSKEVLE (87 aa).

In terms of tissue distribution, expressed in the root elongation zone, stele, root cap, embryo vascular system, leaf axilar buds, silique abscission zone and guard cells.

Involved in responses to osmotic stress and abscisic acid (ABA). May act as a positive regulator of ABA signaling during germination and seedling development under stress. The protein is TPR repeat-containing thioredoxin TTL1 (TTL1) of Arabidopsis thaliana (Mouse-ear cress).